The following is a 179-amino-acid chain: Large ribosomal subunit protein uL5 (179 aa).

The protein belongs to the universal ribosomal protein uL5 family. As to quaternary structure, part of the 50S ribosomal subunit; part of the 5S rRNA/L5/L18/L25 subcomplex. Contacts the 5S rRNA and the P site tRNA. Forms a bridge to the 30S subunit in the 70S ribosome.

In terms of biological role, this is one of the proteins that bind and probably mediate the attachment of the 5S RNA into the large ribosomal subunit, where it forms part of the central protuberance. In the 70S ribosome it contacts protein S13 of the 30S subunit (bridge B1b), connecting the 2 subunits; this bridge is implicated in subunit movement. Contacts the P site tRNA; the 5S rRNA and some of its associated proteins might help stabilize positioning of ribosome-bound tRNAs. This Geotalea daltonii (strain DSM 22248 / JCM 15807 / FRC-32) (Geobacter daltonii) protein is Large ribosomal subunit protein uL5.